A 469-amino-acid chain; its full sequence is C4b-binding protein (469 aa).

A signal peptide spans 1–56 (MCAKQQQTLLPTRAAHGRLHRNRDAVAWPFSTLCRVSGPTLFQMTFTAALWVAVFG). 6 Sushi domains span residues 57-117 (KCGP…SCAK), 118-178 (KHCR…ECVI), 179-242 (VKCG…TCEK), 243-301 (IICS…TCEF), 302-357 (DCDL…QCKA), and 358-415 (LCQK…RCEQ). 12 disulfide bridges follow: Cys-58–Cys-103, Cys-88–Cys-115, Cys-120–Cys-160, Cys-146–Cys-176, Cys-181–Cys-223, Cys-209–Cys-240, Cys-245–Cys-287, Cys-273–Cys-299, Cys-303–Cys-343, Cys-329–Cys-355, Cys-359–Cys-400, and Cys-386–Cys-413. Asn-74 carries an N-linked (GlcNAc...) asparagine glycan. Asn-227, Asn-275, and Asn-292 each carry an N-linked (GlcNAc...) asparagine glycan. Asn-366 and Asn-381 each carry an N-linked (GlcNAc...) asparagine glycan. N-linked (GlcNAc...) asparagine glycosylation is present at Asn-428.

Homoheptamer; not covalently linked. Mouse lacks the beta chain of C4BP.

Its subcellular location is the secreted. Functionally, controls the classical pathway of complement activation. It binds as a cofactor to C3b/C4b inactivator (C3bINA), which then hydrolyzes the complement fragment C4b. It also accelerates the degradation of the C4bC2a complex (C3 convertase) by dissociating the complement fragment C2a. Alpha chain binds C4b. It also interacts with serum amyloid P component. The chain is C4b-binding protein (C4bpa) from Mus musculus (Mouse).